The primary structure comprises 320 residues: Cytochrome f (320 aa).

The N-terminal stretch at methionine 1 to alanine 35 is a signal peptide. Tyrosine 36, cysteine 56, cysteine 59, and histidine 60 together coordinate heme. A helical transmembrane segment spans residues valine 286 to lysine 306.

The protein belongs to the cytochrome f family. The 4 large subunits of the cytochrome b6-f complex are cytochrome b6, subunit IV (17 kDa polypeptide, petD), cytochrome f and the Rieske protein, while the 4 small subunits are PetG, PetL, PetM and PetN. The complex functions as a dimer. Heme serves as cofactor.

The protein localises to the plastid. Its subcellular location is the chloroplast thylakoid membrane. Component of the cytochrome b6-f complex, which mediates electron transfer between photosystem II (PSII) and photosystem I (PSI), cyclic electron flow around PSI, and state transitions. In Panax ginseng (Korean ginseng), this protein is Cytochrome f.